The sequence spans 269 residues: Aquaporin-1 (269 aa).

Topologically, residues 2 to 11 are cytoplasmic; sequence ASEFKKKLFW. Residues 12–29 traverse the membrane as a helical segment; it reads RAVVAEFLATTLFVFISI. Residues 30–46 lie on the Extracellular side of the membrane; the sequence is GSALGFKYPVGNNQTAV. A glycan (N-linked (GlcNAc...) asparagine) is linked at Asn-42. A helical membrane pass occupies residues 47–65; that stretch reads QDNVKVSLAFGLSIATLAQ. Residues 66 to 68 lie on the Cytoplasmic side of the membrane; it reads SVG. An intramembrane segment occupies 69–82; it reads HISGAHLNPAVTLG. The NPA 1 motif lies at 76–78; sequence NPA. Over 83-90 the chain is Cytoplasmic; that stretch reads LLLSCQIS. The chain crosses the membrane as a helical span at residues 91 to 109; that stretch reads IFRALMYIIAQCVGAIVAT. The Extracellular segment spans residues 110–133; sequence AILSGITSSLTGNSLGRNDLADGV. A helical transmembrane segment spans residues 134-153; that stretch reads NSGQGLGIEIIGTLQLVLCV. The Cytoplasmic segment spans residues 154 to 163; that stretch reads LATTDRRRRD. A helical transmembrane segment spans residues 164-181; sequence LGGSAPLAIGLSVALGHL. Residues 182 to 186 are Extracellular-facing; sequence LAIDY. An intramembrane segment occupies 187–199; that stretch reads TGCGINPARSFGS. An NPA 2 motif is present at residues 192-194; the sequence is NPA. Over 200-206 the chain is Extracellular; the sequence is AVITHNF. N-linked (GlcNAc...) asparagine glycosylation is present at Asn-205. The helical transmembrane segment at 207–224 threads the bilayer; that stretch reads SNHWIFWVGPFIGGALAV. At 225-269 the chain is on the cytoplasmic side; sequence LIYDFILAPRSSDLTDRVKVWTSGQVEEYDLDADDINSRVEMKPK. A Phosphoserine modification is found at Ser-247. Phosphotyrosine is present on Tyr-253. The residue at position 262 (Ser-262) is a Phosphoserine.

This sequence belongs to the MIP/aquaporin (TC 1.A.8) family. Homotetramer; each monomer provides an independent water pore. Component of the ankyrin-1 complex in the erythrocyte, composed of ANK1, RHCE, RHAG, SLC4A1, EPB42, GYPA, GYPB and AQP1. Interacts with EPHB2; involved in endolymph production in the inner ear. Identified in a complex with STOM. Interacts (via the N-terminal) with ANK1 (via ANK 1-5 repeats). Interacts (via the C-terminal) with EPB42. In terms of tissue distribution, detected in erythrocytes (at protein level). Expressed in a number of tissues including erythrocytes, renal tubules, retinal pigment epithelium, heart, lung, skeletal muscle, kidney and pancreas. Weakly expressed in brain, placenta and liver.

The protein localises to the cell membrane. It catalyses the reaction H2O(in) = H2O(out). It carries out the reaction nitric oxide(out) = nitric oxide(in). The enzyme catalyses CO2(out) = CO2(in). The catalysed reaction is glycerol(in) = glycerol(out). It catalyses the reaction H2O2(out) = H2O2(in). It carries out the reaction K(+)(in) = K(+)(out). The enzyme catalyses Na(+)(in) = Na(+)(out). With respect to regulation, the water channel activity is inhibited by P-choloromercuribenzene sulphonate and diethylpyrocarbonate(DPPC). The glycerol channel activity is inhibited by P-choloromercuribenzene sulphonate, diethylpyrocarbonate(DPPC), phloretin and Cu(2+). Inhibited by mercury. Forms a water channel that facilitates the transport of water across cell membranes, playing a crucial role in water homeostasis in various tissues. Could also be permeable to small solutes including hydrogen peroxide, glycerol and gases such as amonnia (NH3), nitric oxide (NO) and carbon dioxide (CO2). Recruited to the ankyrin-1 complex, a multiprotein complex of the erythrocyte membrane, it could be part of a CO2 metabolon, linking facilitated diffusion of CO2 across the membrane, anion exchange of Cl(-)/HCO3(-) and interconversion of dissolved CO2 and carbonic acid in the cytosol. In vitro, it shows non-selective gated cation channel activity and may be permeable to cations like K(+) and Na(+) in vivo. This Homo sapiens (Human) protein is Aquaporin-1.